Here is a 175-residue protein sequence, read N- to C-terminus: MMIYIGFILSIVFVISFVGFSSKPSPIYGGLVLIVSGGVGCGIVMSFGGSFLGLMVFLIYLGGMLVVFGYTTAMATEQYPEVWVSNATVLSTFILGVLMEAMLVLYMFKNGEVEVVFEFSGMGDWVVCDGGDSGVFNEEIVGVSALYSYGVWIIIVTGWSLFVGVLVVLEVTRGA.

5 consecutive transmembrane segments (helical) span residues 1–21, 25–45, 47–67, 88–108, and 149–169; these read MMIY…VGFS, SPIY…GIVM, FGGS…MLVV, TVLS…LYMF, and YGVW…LVVL.

The protein belongs to the complex I subunit 6 family. Core subunit of respiratory chain NADH dehydrogenase (Complex I) which is composed of 45 different subunits.

The protein localises to the mitochondrion inner membrane. The enzyme catalyses a ubiquinone + NADH + 5 H(+)(in) = a ubiquinol + NAD(+) + 4 H(+)(out). Core subunit of the mitochondrial membrane respiratory chain NADH dehydrogenase (Complex I) which catalyzes electron transfer from NADH through the respiratory chain, using ubiquinone as an electron acceptor. Essential for the catalytic activity and assembly of complex I. This chain is NADH-ubiquinone oxidoreductase chain 6 (MT-ND6), found in Rhinoceros unicornis (Greater Indian rhinoceros).